Consider the following 286-residue polypeptide: uncharacterized protein (286 aa).

This is an uncharacterized protein from Acidianus convivator (ATV).